A 113-amino-acid polypeptide reads, in one-letter code: Small ribosomal subunit protein uS17 (113 aa).

The protein belongs to the universal ribosomal protein uS17 family. Part of the 30S ribosomal subunit.

One of the primary rRNA binding proteins, it binds specifically to the 5'-end of 16S ribosomal RNA. In Sulfurisphaera tokodaii (strain DSM 16993 / JCM 10545 / NBRC 100140 / 7) (Sulfolobus tokodaii), this protein is Small ribosomal subunit protein uS17.